The sequence spans 149 residues: Transcriptional repressor NrdR (149 aa).

A zinc finger lies at 3–34 (CPFCTAEETKVIDSRLAADGYQIRRRRECIGC). An ATP-cone domain is found at 49-139 (PYIIKNNGNR…VYLSFDDIEE (91 aa)).

It belongs to the NrdR family. Zn(2+) serves as cofactor.

Negatively regulates transcription of bacterial ribonucleotide reductase nrd genes and operons by binding to NrdR-boxes. The sequence is that of Transcriptional repressor NrdR from Haemophilus ducreyi (strain 35000HP / ATCC 700724).